The following is a 245-amino-acid chain: Eukaryotic translation initiation factor 6 (245 aa).

The residue at position 113 (Tyr113) is a Phosphotyrosine. A Phosphothreonine modification is found at Thr165. Phosphoserine is present on Ser166. Phosphoserine; by CK1 is present on residues Ser174 and Ser175. Phosphoserine; by PKC is present on Ser235. Phosphoserine is present on residues Ser239 and Ser243.

This sequence belongs to the eIF-6 family. Monomer. Associates with the 60S ribosomal subunit. Interacts with RACK1. Interacts with DICER1, AGO2, TARBP2, MOV10 and RPL7A; they form a large RNA-induced silencing complex (RISC). Post-translationally, phosphorylation at Ser-174 and Ser-175 by CSNK1D/CK1 promotes nuclear export. In terms of processing, ufmylated by UFL1.

It is found in the cytoplasm. The protein resides in the nucleus. Its subcellular location is the nucleolus. Its function is as follows. Binds to the 60S ribosomal subunit and prevents its association with the 40S ribosomal subunit to form the 80S initiation complex in the cytoplasm. Behaves as a stimulatory translation initiation factor downstream insulin/growth factors. Is also involved in ribosome biogenesis. Associates with pre-60S subunits in the nucleus and is involved in its nuclear export. Cytoplasmic release of TIF6 from 60S subunits and nuclear relocalization is promoted by a RACK1 (RACK1)-dependent protein kinase C activity. In tissues responsive to insulin, controls fatty acid synthesis and glycolysis by exerting translational control of adipogenic transcription factors such as CEBPB, CEBPD and ATF4 that have G/C rich or uORF in their 5'UTR. Required for ROS-dependent megakaryocyte maturation and platelets formation, controls the expression of mitochondrial respiratory chain genes involved in reactive oxygen species (ROS) synthesis. Involved in miRNA-mediated gene silencing by the RNA-induced silencing complex (RISC). Required for both miRNA-mediated translational repression and miRNA-mediated cleavage of complementary mRNAs by RISC. Modulates cell cycle progression and global translation of pre-B cells, its activation seems to be rate-limiting in tumorigenesis and tumor growth. The polypeptide is Eukaryotic translation initiation factor 6 (Eif6) (Rattus norvegicus (Rat)).